We begin with the raw amino-acid sequence, 799 residues long: DISARM protein DrmE (799 aa).

It is found in the cytoplasm. Component of antiviral defense system DISARM (defense island system associated with restriction-modification), composed of DrmE, DrmA, DrmB, DrmC and DrmMII. DISARM is probably a multi-gene restriction module, this subunit has an unknown function. Expression of DISARM in B.subtilis (strain BEST7003) confers resistance to phages Nf, phi29, phi105, phi3T, SPO1, SPR and SPP1. Protection is over 10(7)-fold against phi3T, 10(4)-10(5)-fold against Nf, phi29, phi105 and SPR, 100-fold against SPO1 and 10-fold against SPP1. DISARM does not interfere with phage adsorption, but instead interferes with (phi3T) DNA replication early in its cycle, preventing replication, circularization and lysogeny and probably causes phage DNA degradation (DNA is degraded in SPP1-infected cells). The chain is DISARM protein DrmE from Bacillus paralicheniformis (strain ATCC 9945a / NCIMB 11709 / CD-2).